Consider the following 469-residue polypeptide: 3-isopropylmalate dehydratase large subunit 1 (469 aa).

Positions 344, 404, and 407 each coordinate [4Fe-4S] cluster.

This sequence belongs to the aconitase/IPM isomerase family. LeuC type 1 subfamily. In terms of assembly, heterodimer of LeuC and LeuD. [4Fe-4S] cluster serves as cofactor.

The enzyme catalyses (2R,3S)-3-isopropylmalate = (2S)-2-isopropylmalate. It functions in the pathway amino-acid biosynthesis; L-leucine biosynthesis; L-leucine from 3-methyl-2-oxobutanoate: step 2/4. Functionally, catalyzes the isomerization between 2-isopropylmalate and 3-isopropylmalate, via the formation of 2-isopropylmaleate. This chain is 3-isopropylmalate dehydratase large subunit 1, found in Rubrobacter xylanophilus (strain DSM 9941 / JCM 11954 / NBRC 16129 / PRD-1).